A 206-amino-acid chain; its full sequence is Protein-methionine-sulfoxide reductase heme-binding subunit MsrQ (206 aa).

Helical transmembrane passes span 8–28 (IVWL…WLVW), 82–102 (LWCF…ELGI), 116–136 (PYLT…LTST), and 153–173 (FVYL…KILS).

This sequence belongs to the MsrQ family. In terms of assembly, heterodimer of a catalytic subunit (MsrP) and a heme-binding subunit (MsrQ). FMN serves as cofactor. The cofactor is heme b.

It localises to the cell inner membrane. Its function is as follows. Part of the MsrPQ system that repairs oxidized periplasmic proteins containing methionine sulfoxide residues (Met-O), using respiratory chain electrons. Thus protects these proteins from oxidative-stress damage caused by reactive species of oxygen and chlorine generated by the host defense mechanisms. MsrPQ is essential for the maintenance of envelope integrity under bleach stress, rescuing a wide series of structurally unrelated periplasmic proteins from methionine oxidation. MsrQ provides electrons for reduction to the reductase catalytic subunit MsrP, using the quinone pool of the respiratory chain. In Citrobacter koseri (strain ATCC BAA-895 / CDC 4225-83 / SGSC4696), this protein is Protein-methionine-sulfoxide reductase heme-binding subunit MsrQ.